We begin with the raw amino-acid sequence, 228 residues long: Large ribosomal subunit protein uL3 (228 aa).

The segment at 135 to 159 (MKSQRASHGNSRSHNVPGSIGMAQD) is disordered. Residues 140-150 (ASHGNSRSHNV) are compositionally biased toward polar residues. N5-methylglutamine is present on Gln-158.

The protein belongs to the universal ribosomal protein uL3 family. Part of the 50S ribosomal subunit. Forms a cluster with proteins L14 and L19. Post-translationally, methylated by PrmB.

Its function is as follows. One of the primary rRNA binding proteins, it binds directly near the 3'-end of the 23S rRNA, where it nucleates assembly of the 50S subunit. The chain is Large ribosomal subunit protein uL3 from Albidiferax ferrireducens (strain ATCC BAA-621 / DSM 15236 / T118) (Rhodoferax ferrireducens).